We begin with the raw amino-acid sequence, 208 residues long: AN1-type zinc finger protein 6 (208 aa).

The A20-type zinc-finger motif lies at Ser-8–Asn-42. Residues Cys-14, Cys-18, Cys-30, and Cys-33 each coordinate Zn(2+). Over residues Gln-41 to Asp-68 the composition is skewed to polar residues. A disordered region spans residues Gln-41 to Glu-140. A Phosphoserine modification is found at Ser-49. Low complexity predominate over residues Ser-80–Ser-94. Composition is skewed to polar residues over residues Leu-95–Val-110 and Val-120–Glu-133. An AN1-type zinc finger spans residues Lys-143–Ala-189. Residues Cys-149, Cys-152, Cys-163, Cys-165, Cys-170, His-173, His-179, and Cys-181 each coordinate Zn(2+). An N6-acetyllysine modification is found at Lys-204.

As to quaternary structure, interacts with PKN1. Interacts with TRAF2. Interacts with mono- and polyubiquitin. Interacts with PEX6. Interacts with PEX5 (Cys-linked ubiquitinated). In terms of tissue distribution, widely expressed with high level in heart, skeletal muscle, liver, kidney and placenta.

The protein localises to the cytoplasm. Involved in regulation of TNF-alpha induced NF-kappa-B activation and apoptosis. Involved in modulation of 'Lys-48'-linked polyubiquitination status of TRAF2 and decreases association of TRAF2 with RIPK1. Required for PTS1 target sequence-dependent protein import into peroxisomes and PEX5 stability; may cooperate with PEX6. In vitro involved in PEX5 export from the cytosol to peroxisomes. In Homo sapiens (Human), this protein is AN1-type zinc finger protein 6 (ZFAND6).